We begin with the raw amino-acid sequence, 262 residues long: Large ribosomal subunit protein uL10m (262 aa).

A mitochondrion-targeting transit peptide spans 1–28 (MAAAVAGILRGGLPPRAAWLPTLQTVRH). The interval 243-262 (GDCATSANEKLHPPDPAPDA) is disordered.

This sequence belongs to the universal ribosomal protein uL10 family. As to quaternary structure, component of the mitochondrial ribosome large subunit (39S) which comprises a 16S rRNA and about 50 distinct proteins.

The protein localises to the mitochondrion. This is Large ribosomal subunit protein uL10m (Mrpl10) from Mus musculus (Mouse).